The chain runs to 369 residues: 1-aminocyclopropane-1-carboxylate oxidase homolog 2 (369 aa).

In terms of domain architecture, Fe2OG dioxygenase spans 217 to 318 (KGLRMLCHYF…VSVACFFHTH (102 aa)). Positions 241, 243, and 297 each coordinate Fe cation.

This sequence belongs to the iron/ascorbate-dependent oxidoreductase family. Requires Fe cation as cofactor.

The polypeptide is 1-aminocyclopropane-1-carboxylate oxidase homolog 2 (Arabidopsis thaliana (Mouse-ear cress)).